Here is a 930-residue protein sequence, read N- to C-terminus: Translation initiation factor IF-2 (930 aa).

Low complexity predominate over residues 50–67 (FKPAAAPKVEAKPAAPKV). Disordered stretches follow at residues 50–217 (FKPA…SSEE) and 260–346 (EVVP…HELP). Basic and acidic residues-rich tracts occupy residues 68 to 90 (SAEKKAEKSEPAKPAVAKEEAKP) and 110 to 125 (FKAEREARAKEQAERR). Residues 129 to 141 (KGNNRDQQQNGNR) show a composition bias toward low complexity. 2 stretches are compositionally biased toward basic and acidic residues: residues 157–167 (RDNRRFNDQAK) and 262–295 (VPEKKEPAVDTRRKKQARPDKNRDDYDHEEDGPR). A compositionally biased stretch (low complexity) spans 309 to 318 (NQKNSNWNNN). The span at 337-346 (VTERKFHELP) shows a compositional bias: basic and acidic residues. One can recognise a tr-type G domain in the interval 432-599 (ERPPVVTIMG…TVLLVAEIQE (168 aa)). The segment at 441-448 (GHVDHGKT) is G1. 441–448 (GHVDHGKT) is a GTP binding site. A G2 region spans residues 466–470 (GITQH). A G3 region spans residues 487–490 (DTPG). GTP contacts are provided by residues 487–491 (DTPGH) and 541–544 (NKID). The G4 stretch occupies residues 541-544 (NKID). A G5 region spans residues 577-579 (SAK).

It belongs to the TRAFAC class translation factor GTPase superfamily. Classic translation factor GTPase family. IF-2 subfamily.

It localises to the cytoplasm. One of the essential components for the initiation of protein synthesis. Protects formylmethionyl-tRNA from spontaneous hydrolysis and promotes its binding to the 30S ribosomal subunits. Also involved in the hydrolysis of GTP during the formation of the 70S ribosomal complex. The polypeptide is Translation initiation factor IF-2 (Streptococcus pneumoniae (strain CGSP14)).